The chain runs to 389 residues: Succinyl-diaminopimelate desuccinylase (389 aa).

H75 contacts Zn(2+). The active site involves D77. D108 is a binding site for Zn(2+). E142 serves as the catalytic Proton acceptor. Zn(2+)-binding residues include E143, E171, and H357.

This sequence belongs to the peptidase M20A family. DapE subfamily. Homodimer. The cofactor is Zn(2+). Co(2+) serves as cofactor.

The enzyme catalyses N-succinyl-(2S,6S)-2,6-diaminopimelate + H2O = (2S,6S)-2,6-diaminopimelate + succinate. The protein operates within amino-acid biosynthesis; L-lysine biosynthesis via DAP pathway; LL-2,6-diaminopimelate from (S)-tetrahydrodipicolinate (succinylase route): step 3/3. Functionally, catalyzes the hydrolysis of N-succinyl-L,L-diaminopimelic acid (SDAP), forming succinate and LL-2,6-diaminopimelate (DAP), an intermediate involved in the bacterial biosynthesis of lysine and meso-diaminopimelic acid, an essential component of bacterial cell walls. The protein is Succinyl-diaminopimelate desuccinylase of Paracidovorax citrulli (strain AAC00-1) (Acidovorax citrulli).